A 262-amino-acid polypeptide reads, in one-letter code: Hydroxyethylthiazole kinase (262 aa).

Substrate is bound at residue Met-39. Residues Lys-115 and Thr-160 each contribute to the ATP site. Gly-187 provides a ligand contact to substrate.

Belongs to the Thz kinase family. Mg(2+) serves as cofactor.

The catalysed reaction is 5-(2-hydroxyethyl)-4-methylthiazole + ATP = 4-methyl-5-(2-phosphooxyethyl)-thiazole + ADP + H(+). It functions in the pathway cofactor biosynthesis; thiamine diphosphate biosynthesis; 4-methyl-5-(2-phosphoethyl)-thiazole from 5-(2-hydroxyethyl)-4-methylthiazole: step 1/1. Functionally, catalyzes the phosphorylation of the hydroxyl group of 4-methyl-5-beta-hydroxyethylthiazole (THZ). This chain is Hydroxyethylthiazole kinase, found in Staphylococcus epidermidis (strain ATCC 12228 / FDA PCI 1200).